Consider the following 202-residue polypeptide: Large ribosomal subunit protein bL17 (202 aa).

The disordered stretch occupies residues 132–202 (DAAQKAASAG…TEVEKADDDK (71 aa)). The span at 134 to 168 (AQKAASAGAQEVTAAAAPQAAVEPEAVETEASAET) shows a compositional bias: low complexity. Acidic residues predominate over residues 169–193 (AEAEVETAEVEAVDEASAEEADEAT).

Belongs to the bacterial ribosomal protein bL17 family. In terms of assembly, part of the 50S ribosomal subunit. Contacts protein L32.

This is Large ribosomal subunit protein bL17 from Mycolicibacterium vanbaalenii (strain DSM 7251 / JCM 13017 / BCRC 16820 / KCTC 9966 / NRRL B-24157 / PYR-1) (Mycobacterium vanbaalenii).